A 265-amino-acid chain; its full sequence is 4-hydroxy-tetrahydrodipicolinate reductase (265 aa).

NAD(+)-binding positions include 7-12 (GASGRM) and aspartate 33. Position 34 (arginine 34) interacts with NADP(+). Residues 96–98 (GTT) and 120–123 (AANM) each bind NAD(+). Catalysis depends on histidine 153, which acts as the Proton donor/acceptor. Histidine 154 contacts (S)-2,3,4,5-tetrahydrodipicolinate. The active-site Proton donor is the lysine 157. Residue 163-164 (GT) coordinates (S)-2,3,4,5-tetrahydrodipicolinate.

This sequence belongs to the DapB family.

The protein localises to the cytoplasm. It catalyses the reaction (S)-2,3,4,5-tetrahydrodipicolinate + NAD(+) + H2O = (2S,4S)-4-hydroxy-2,3,4,5-tetrahydrodipicolinate + NADH + H(+). The enzyme catalyses (S)-2,3,4,5-tetrahydrodipicolinate + NADP(+) + H2O = (2S,4S)-4-hydroxy-2,3,4,5-tetrahydrodipicolinate + NADPH + H(+). It participates in amino-acid biosynthesis; L-lysine biosynthesis via DAP pathway; (S)-tetrahydrodipicolinate from L-aspartate: step 4/4. In terms of biological role, catalyzes the conversion of 4-hydroxy-tetrahydrodipicolinate (HTPA) to tetrahydrodipicolinate. This Burkholderia lata (strain ATCC 17760 / DSM 23089 / LMG 22485 / NCIMB 9086 / R18194 / 383) protein is 4-hydroxy-tetrahydrodipicolinate reductase.